Reading from the N-terminus, the 446-residue chain is MSSSLANRNIYTVSRLNSEVRLLLENEMGIVWLVGEISNFSAPVSGHWYLTLKDSQAQVKCAMFKGNNRLVNFKPQNGQQVLVKARLSLYEPRGDYQIILESMQPEGDGRLQQQFEQLKMQLAAEGLFAQTRKKPLPENPRCVGIITSRTGAALHDILHVLKRRDPNLPVVIYPTLVQGEEAAIQIAQAIGRANTRAECDVLIVGRGGGSLEDLWCFNHEIVARTIAASEIPIISAVGHEIDVTIADFVADVRAPTPSAAAELVSRDHRHKQQALHQWQAKLASTMRHYLAQQETQFARLQHKLDKQHPQARLERQQQQLDELSLRLEQKMQQRLATQQQRWDRLSHKIELHSPIHLIRQQRFNLIQQEQRINQSIQRYLIQSRHQLALLSEKLDAVSPLATLARGYSVTRTTQGELVRQSAQVKPGDTLVTQLMDGEILSTVNSR.

Belongs to the XseA family. In terms of assembly, heterooligomer composed of large and small subunits.

It is found in the cytoplasm. The enzyme catalyses Exonucleolytic cleavage in either 5'- to 3'- or 3'- to 5'-direction to yield nucleoside 5'-phosphates.. Bidirectionally degrades single-stranded DNA into large acid-insoluble oligonucleotides, which are then degraded further into small acid-soluble oligonucleotides. In Vibrio cholerae serotype O1 (strain ATCC 39315 / El Tor Inaba N16961), this protein is Exodeoxyribonuclease 7 large subunit.